Consider the following 101-residue polypeptide: Ubiquitin-related modifier 1 homolog (101 aa).

At glycine 101 the chain carries 1-thioglycine. Glycine 101 is covalently cross-linked (Glycyl lysine isopeptide (Gly-Lys) (interchain with K-? in acceptor proteins)).

This sequence belongs to the URM1 family. Interacts with cer. In terms of processing, C-terminal thiocarboxylation occurs in 2 steps, it is first acyl-adenylated (-COAMP) via the hesA/moeB/thiF part of the MOCS3 homolog, then thiocarboxylated (-COSH) via the rhodanese domain of the MOCS3 homolog.

The protein resides in the cytoplasm. Its pathway is tRNA modification; 5-methoxycarbonylmethyl-2-thiouridine-tRNA biosynthesis. Functionally, acts as a sulfur carrier required for 2-thiolation of mcm(5)S(2)U at tRNA wobble positions of cytosolic tRNA(Lys), tRNA(Glu) and tRNA(Gln). Serves as sulfur donor in tRNA 2-thiolation reaction by being thiocarboxylated (-COSH) at its C-terminus by MOCS3. The sulfur is then transferred to tRNA to form 2-thiolation of mcm(5)S(2)U. Also acts as a ubiquitin-like protein (UBL) that is covalently conjugated via an isopeptide bond to lysine residues of target proteins such as Prx2/Jafrac1, Ciao1, Eip71CD and GILT1. The thiocarboxylated form serves as substrate for conjugation and oxidative stress specifically induces the formation of UBL-protein conjugates. This chain is Ubiquitin-related modifier 1 homolog, found in Drosophila yakuba (Fruit fly).